Consider the following 156-residue polypeptide: Arginine repressor (156 aa).

It belongs to the ArgR family.

It localises to the cytoplasm. Its pathway is amino-acid biosynthesis; L-arginine biosynthesis [regulation]. Its function is as follows. Regulates arginine biosynthesis genes. This Escherichia fergusonii (strain ATCC 35469 / DSM 13698 / CCUG 18766 / IAM 14443 / JCM 21226 / LMG 7866 / NBRC 102419 / NCTC 12128 / CDC 0568-73) protein is Arginine repressor.